We begin with the raw amino-acid sequence, 488 residues long: GTPase Der (488 aa).

EngA-type G domains lie at 3–166 (PVVA…AEAM) and 199–372 (IKLA…DSAT). Residues 9-16 (GRPNVGKS), 56-60 (DTGGI), 118-121 (NKID), 205-212 (GKPNVGKS), 252-256 (DTAGV), and 317-320 (NKWD) each bind GTP. The KH-like domain occupies 373 to 457 (RRVSTSMLTR…PIQLRFQEGD (85 aa)).

Belongs to the TRAFAC class TrmE-Era-EngA-EngB-Septin-like GTPase superfamily. EngA (Der) GTPase family. In terms of assembly, associates with the 50S ribosomal subunit.

Its function is as follows. GTPase that plays an essential role in the late steps of ribosome biogenesis. This is GTPase Der from Shewanella sp. (strain ANA-3).